The chain runs to 392 residues: G2/mitotic-specific cyclin-B2 (392 aa).

The protein belongs to the cyclin family. Cyclin AB subfamily. Interacts with the CDK1 protein kinase to form a serine/threonine kinase holoenzyme complex also known as maturation promoting factor (MPF). The cyclin subunit imparts substrate specificity to the complex.

Its function is as follows. Essential for the control of the cell cycle at the G2/M (mitosis) transition. The polypeptide is G2/mitotic-specific cyclin-B2 (CCNB2) (Rana japonica (Japanese reddish frog)).